Reading from the N-terminus, the 229-residue chain is Enolase-phosphatase E1 (229 aa).

The protein belongs to the HAD-like hydrolase superfamily. MasA/MtnC family. In terms of assembly, monomer. The cofactor is Mg(2+).

The catalysed reaction is 5-methylsulfanyl-2,3-dioxopentyl phosphate + H2O = 1,2-dihydroxy-5-(methylsulfanyl)pent-1-en-3-one + phosphate. It functions in the pathway amino-acid biosynthesis; L-methionine biosynthesis via salvage pathway; L-methionine from S-methyl-5-thio-alpha-D-ribose 1-phosphate: step 3/6. It participates in amino-acid biosynthesis; L-methionine biosynthesis via salvage pathway; L-methionine from S-methyl-5-thio-alpha-D-ribose 1-phosphate: step 4/6. Its function is as follows. Bifunctional enzyme that catalyzes the enolization of 2,3-diketo-5-methylthiopentyl-1-phosphate (DK-MTP-1-P) into the intermediate 2-hydroxy-3-keto-5-methylthiopentenyl-1-phosphate (HK-MTPenyl-1-P), which is then dephosphorylated to form the acireductone 1,2-dihydroxy-3-keto-5-methylthiopentene (DHK-MTPene). The polypeptide is Enolase-phosphatase E1 (Yersinia pseudotuberculosis serotype IB (strain PB1/+)).